Here is a 408-residue protein sequence, read N- to C-terminus: MSAMPNTSSISVSAAFDAHRPLTLTYIDNPSTKHVIVGMSGGVDSSVSAVLLQQAGFVVEGLFMKNWEEDDGTEYCTAMDDLADAQAVCDKIGIKLHTANFAMEYWDRVFEHFLAEYKAGRTPNPDILCNKEIKFKAFLDYALTLGADYIATGHYTRRSVNYKNNDGIEVAQLLRGLDNNKDQSYFLHAVGGDKLAKTLFPVGELEKPVVRQIAEEHDLITANKKDSTGICFIGERRFKDFLQQYLPAQKGDIVTDDGINIGTHDGLMYYTLGQRGGIGIGGVKDRPEEPWFVLAKDLDNNRLIVGQGHEHPMMLSNELHAYKLDWTDGLPPTDIFSLEGLRCMAKSRYRQPDQACRVFAVNADGSEVRVIFDEPQRAVTPGQSAVFYIEEVCLGGGVIASIDAPCGF.

ATP-binding positions include 38–45 (GMSGGVDS) and Met64. An interaction with target base in tRNA region spans residues 124 to 126 (NPD). The active-site Nucleophile is Cys129. An intrachain disulfide couples Cys129 to Cys231. Residue Gly153 participates in ATP binding. The interaction with tRNA stretch occupies residues 181–183 (KDQ). Catalysis depends on Cys231, which acts as the Cysteine persulfide intermediate. An interaction with tRNA region spans residues 348 to 349 (RY).

Belongs to the MnmA/TRMU family.

The protein localises to the cytoplasm. The catalysed reaction is S-sulfanyl-L-cysteinyl-[protein] + uridine(34) in tRNA + AH2 + ATP = 2-thiouridine(34) in tRNA + L-cysteinyl-[protein] + A + AMP + diphosphate + H(+). Catalyzes the 2-thiolation of uridine at the wobble position (U34) of tRNA, leading to the formation of s(2)U34. The protein is tRNA-specific 2-thiouridylase MnmA of Psychrobacter arcticus (strain DSM 17307 / VKM B-2377 / 273-4).